Consider the following 42-residue polypeptide: Large ribosomal subunit protein bL36 (42 aa).

The protein belongs to the bacterial ribosomal protein bL36 family.

This Wolbachia pipientis wMel protein is Large ribosomal subunit protein bL36.